A 428-amino-acid polypeptide reads, in one-letter code: L-lysine N6-monooxygenase MbtG (428 aa).

Positions 1–20 (MSTLAILGAGAKAVAVAAKA) are cleaved as a signal peptide.

This sequence belongs to the lysine N(6)-hydroxylase/L-ornithine N(5)-oxygenase family. The cofactor is FAD.

It catalyses the reaction L-lysine + NADPH + O2 = N(6)-hydroxy-L-lysine + NADP(+) + H2O. The protein operates within siderophore biosynthesis; mycobactin biosynthesis. Functionally, flavoprotein monooxygenase required for N-hydroxylation of the two acylated lysine residues during mycobactin assembly, thus producing the hydroxamate groups necessary for iron sequestration. Is also able, but less efficiently, to hydroxylate L-lysine (non acylated) in vitro. The polypeptide is L-lysine N6-monooxygenase MbtG (mbtG) (Mycolicibacterium paratuberculosis (strain ATCC BAA-968 / K-10) (Mycobacterium paratuberculosis)).